Consider the following 115-residue polypeptide: UPF0738 protein SAV1005 (115 aa).

Belongs to the UPF0738 family.

The sequence is that of UPF0738 protein SAV1005 from Staphylococcus aureus (strain Mu50 / ATCC 700699).